Consider the following 566-residue polypeptide: Putative ABC transporter ATP-binding protein BC_2655 (566 aa).

ABC transporter domains follow at residues 5–246 (ISFE…GLRE) and 300–533 (LKVE…ANLR). Residues 39 to 46 (GRSGSGKS) and 333 to 340 (GHNGAGKS) each bind ATP.

It belongs to the ABC transporter superfamily.

It is found in the cell membrane. In terms of biological role, probably part of an ABC transporter complex. Responsible for energy coupling to the transport system. This Bacillus cereus (strain ATCC 14579 / DSM 31 / CCUG 7414 / JCM 2152 / NBRC 15305 / NCIMB 9373 / NCTC 2599 / NRRL B-3711) protein is Putative ABC transporter ATP-binding protein BC_2655.